Reading from the N-terminus, the 140-residue chain is Putative pre-16S rRNA nuclease (140 aa).

Belongs to the YqgF nuclease family.

Its subcellular location is the cytoplasm. Its function is as follows. Could be a nuclease involved in processing of the 5'-end of pre-16S rRNA. The polypeptide is Putative pre-16S rRNA nuclease (Lachnospira eligens (strain ATCC 27750 / DSM 3376 / VPI C15-48 / C15-B4) (Eubacterium eligens)).